A 201-amino-acid polypeptide reads, in one-letter code: Large ribosomal subunit protein bL12m (201 aa).

The N-terminal 38 residues, 1 to 38 (MLPVAASRCLWGPRLGLRGAALRLARQQMPSVCAARQL), are a transit peptide targeting the mitochondrion. Disordered stretches follow at residues 37 to 60 (QLRSSSHRRSEALAGAPLDNAPKE) and 109 to 130 (VSAAAPASEAAEEEDVPKQKER). Lys-128, Lys-141, Lys-145, and Lys-147 each carry N6-acetyllysine. Lys-153 carries the post-translational modification N6-acetyllysine; alternate. Residue Lys-153 is modified to N6-succinyllysine; alternate. Lys-153 is covalently cross-linked (Glycyl lysine isopeptide (Lys-Gly) (interchain with G-Cter in ubiquitin)). The residue at position 165 (Lys-165) is an N6-succinyllysine. Lys-166 and Lys-176 each carry N6-acetyllysine. Lys-181 is modified (N6-acetyllysine; alternate). Lys-181 carries the post-translational modification N6-succinyllysine; alternate. N6-acetyllysine is present on Lys-188.

This sequence belongs to the bacterial ribosomal protein bL12 family. Component of the mitochondrial ribosome large subunit (39S) which comprises a 16S rRNA and about 50 distinct proteins. Interacts with NOA1. In terms of processing, two mature forms are produced by differential two-step proteolytic cleavage. Cleaved by the mitochondrial processing protease to produce the long mature form and subsequently by the mitochondrial intermediate protease to produce the short mature form. In the presence of CUL3, undergoes 'Lys-63'-linked ubiquitination at Lys-153 which results in proteasomal degradation.

The protein localises to the mitochondrion matrix. Its function is as follows. As a component of the mitochondrial large ribosomal subunit, plays a role in mitochondrial translation. When present in mitochondria as a free protein not associated with the ribosome, associates with mitochondrial RNA polymerase POLRMT to activate transcription. Required for POLRMT stability. This is Large ribosomal subunit protein bL12m (Mrpl12) from Mus musculus (Mouse).